The sequence spans 424 residues: Mitogen-activated protein kinase mpkA (424 aa).

The region spanning 23–314 is the Protein kinase domain; it reads YNVTKELGQG…VEEALEHPYL (292 aa). Residues 29 to 37 and Lys-52 each bind ATP; that span reads LGQGAYGIV. Residues 375-424 form a disordered region; that stretch reads QQIAQQTNVPIPDHQQGGWKQEEPKPQEVHAAGGHVNDLESSLQRGMDVQ.

The protein belongs to the protein kinase superfamily. Ser/Thr protein kinase family. In terms of assembly, interacts with flbB, flbC, brlA, and rasB. Interacts with fmqA and fmqC. Interacts with hsp90. Mg(2+) is required as a cofactor. Phosphorylated by the upstreamm MAPKK mkk2. Phosphorylation is induced during asexual development. Phosphorylation is regulated by rlmA.

The catalysed reaction is L-seryl-[protein] + ATP = O-phospho-L-seryl-[protein] + ADP + H(+). The enzyme catalyses L-threonyl-[protein] + ATP = O-phospho-L-threonyl-[protein] + ADP + H(+). Its activity is regulated as follows. Activated by threonine and tyrosine phosphorylation by the upstreamm MAPKK mkk2. In terms of biological role, mitogen-activated protein kinase; part of cell wall integrity (CWI) signaling pathway composed of pkcA, the bck1-mkk2-mpka MAPK cascade and the downstream rlmA transcription regulator. The CWI signaling pathway regulates cell wall integrity and pyomelanin formation. CWI also controls oxidative stress response, gliotoxin production, iron adaptation and asexual development. Finally, CWI is constitutively required for A.fumigatus to cope with the temperature increase found in the mammalian lung environment, during infection. MpkA positively modulates the expression of fumiquinazoline cluster during conidiogenesis and directly phosphorylates fmqC, and perhaps also fmqA. The protein is Mitogen-activated protein kinase mpkA of Aspergillus fumigatus (strain ATCC MYA-4609 / CBS 101355 / FGSC A1100 / Af293) (Neosartorya fumigata).